Consider the following 190-residue polypeptide: Elongation factor P (190 aa).

This sequence belongs to the elongation factor P family.

It localises to the cytoplasm. The protein operates within protein biosynthesis; polypeptide chain elongation. Functionally, involved in peptide bond synthesis. Stimulates efficient translation and peptide-bond synthesis on native or reconstituted 70S ribosomes in vitro. Probably functions indirectly by altering the affinity of the ribosome for aminoacyl-tRNA, thus increasing their reactivity as acceptors for peptidyl transferase. This is Elongation factor P from Persephonella marina (strain DSM 14350 / EX-H1).